The sequence spans 461 residues: MINDVINTIEKNSMIKQNDRIVVAVSGGPDSICLLHILFKLKDKFNTSICAAHVNHCIRGEAADKDEEYVKKFCEKLDIQFYVKRVDVNKIAHEKKISSEMAGREIRYAFFEEVKERFKANKIAIAHNANDQAETIMMRIIRGTGTEGIKGIRPVRDGYYIRPLIEIRRSSIEKYCEDEKLMPRIDATNLERDYNRNKIRLDLIPYIVKNFNEDIVGALNRLGELVTIDNDYLEKLAKSKYKLYCNECEKQVIISKEAFSNDTAILSRIIRRAVFYLVNSKYNLEKKHIDSIIGCQKNTTGKQINLPNNMRAYNNYGDICLRIKEDESCIGKKEYNLHMDKLNSVHEENLIIGIRLIHNSKDIRLEGNKNVKYFDADKAGKYITLRYRSEGDKFMPFGMKNNKKLKDIFINLKIPREERNKIPLICFGGEIAWITGFKISEKFKIDNNTKKILEIKIEREE.

Position 26–31 (26–31 (SGGPDS)) interacts with ATP.

It belongs to the tRNA(Ile)-lysidine synthase family.

Its subcellular location is the cytoplasm. It catalyses the reaction cytidine(34) in tRNA(Ile2) + L-lysine + ATP = lysidine(34) in tRNA(Ile2) + AMP + diphosphate + H(+). Ligates lysine onto the cytidine present at position 34 of the AUA codon-specific tRNA(Ile) that contains the anticodon CAU, in an ATP-dependent manner. Cytidine is converted to lysidine, thus changing the amino acid specificity of the tRNA from methionine to isoleucine. The chain is tRNA(Ile)-lysidine synthase from Clostridium acetobutylicum (strain ATCC 824 / DSM 792 / JCM 1419 / IAM 19013 / LMG 5710 / NBRC 13948 / NRRL B-527 / VKM B-1787 / 2291 / W).